The following is a 397-amino-acid chain: Acetate kinase (397 aa).

N8 is a Mg(2+) binding site. ATP is bound at residue K15. R90 lines the substrate pocket. Residue D147 is the Proton donor/acceptor of the active site. Residues 207-211, 283-285, and 330-334 contribute to the ATP site; these read HLGAG, DMR, and GVGEN. E383 is a binding site for Mg(2+).

Belongs to the acetokinase family. In terms of assembly, homodimer. It depends on Mg(2+) as a cofactor. Requires Mn(2+) as cofactor.

Its subcellular location is the cytoplasm. It catalyses the reaction acetate + ATP = acetyl phosphate + ADP. It functions in the pathway metabolic intermediate biosynthesis; acetyl-CoA biosynthesis; acetyl-CoA from acetate: step 1/2. Catalyzes the formation of acetyl phosphate from acetate and ATP. Can also catalyze the reverse reaction. The polypeptide is Acetate kinase (Fructilactobacillus sanfranciscensis (Lactobacillus sanfranciscensis)).